Here is a 270-residue protein sequence, read N- to C-terminus: Cell division protein DivIB (270 aa).

Topologically, residues 1 to 38 are cytoplasmic; sequence MTRRNNPELNDEREPIDKIKASIDLKKKTIRRNKRKRR. Residues 39 to 59 form a helical membrane-spanning segment; sequence LIKMLQFLIVIGVLIGIYYFD. Residues 60–270 are Extracellular-facing; the sequence is KSDASRVHNV…QSAVVKACGS (211 aa). Residues 64–135 form the POTRA domain; sequence SRVHNVRVNG…INLNVTEKKA (72 aa).

The protein belongs to the FtsQ/DivIB family. DivIB subfamily.

It is found in the cell membrane. Its function is as follows. Cell division protein that may be involved in stabilizing or promoting the assembly of the division complex. The chain is Cell division protein DivIB from Erysipelothrix rhusiopathiae (strain Fujisawa).